Here is a 274-residue protein sequence, read N- to C-terminus: Leucine-rich repeat-containing protein 10 (274 aa).

8 LRR repeats span residues leucine 30–phenylalanine 51, threonine 52–leucine 74, asparagine 76–leucine 97, lysine 98–leucine 120, glutamine 121–leucine 143, leucine 145–leucine 166, arginine 167–methionine 189, and phenylalanine 191–asparagine 213. The tract at residues arginine 236 to serine 274 is disordered. The segment covering arginine 239–arginine 250 has biased composition (basic and acidic residues). Residues glutamate 264–serine 274 show a composition bias toward pro residues.

As to expression, detected specifically in the heart.

It localises to the nucleus. May play important roles in cardiac development and/or cardiac function. The sequence is that of Leucine-rich repeat-containing protein 10 (Lrrc10) from Mus musculus (Mouse).